The sequence spans 261 residues: RING finger and CHY zinc finger domain-containing protein 1 (261 aa).

The segment at 13-80 (LAQGPRGCEH…AQQTCEDCST (68 aa)) adopts a CHY-type zinc-finger fold. Zn(2+) is bound by residues cysteine 20, histidine 22, cysteine 33, cysteine 34, cysteine 40, cysteine 43, histidine 44, histidine 50, cysteine 62, cysteine 65, cysteine 75, cysteine 78, cysteine 87, cysteine 90, histidine 101, cysteine 102, cysteine 105, cysteine 108, histidine 118, cysteine 119, cysteine 122, cysteine 125, histidine 134, and cysteine 136. The CTCHY-type zinc-finger motif lies at 82–144 (FGEYYCSICH…KCIENVSRQN (63 aa)). The RING-type zinc-finger motif lies at 145–189 (CPICLEDIHTSRVVAHVLPCGHLLHRTCYEEMLKEGYRCPLCMHS).

In terms of assembly, monomer and homodimer. Interacts with AR, MDM2, KAT5, PLAG1, PLAGL2, COPE, UBE2D2 and GORAB/NTKLBP1. Subject to ubiquitination and proteasomal degradation. Interaction with PLAGL2 or KAT5 enhances protein stability. In terms of tissue distribution, detected in testis, liver, kidney and heart.

It localises to the nucleus. The protein localises to the nucleus speckle. Its subcellular location is the cytoplasm. It carries out the reaction S-ubiquitinyl-[E2 ubiquitin-conjugating enzyme]-L-cysteine + [acceptor protein]-L-lysine = [E2 ubiquitin-conjugating enzyme]-L-cysteine + N(6)-ubiquitinyl-[acceptor protein]-L-lysine.. Its pathway is protein modification; protein ubiquitination. E3 ubiquitin-protein ligase that mediates ubiquitination of target proteins, including p53/TP53, TP73, HDAC1 and CDKN1B. Mediates ubiquitination and degradation of p53/TP53; preferentially acts on tetrameric p53/TP53. Catalyzes monoubiquitinates the translesion DNA polymerase POLH. Involved in the ribosome-associated quality control (RQC) pathway, which mediates the extraction of incompletely synthesized nascent chains from stalled ribosomes: RCHY1 acts downstream of NEMF and recognizes CAT tails associated with stalled nascent chains, leading to their ubiquitination and degradation. The polypeptide is RING finger and CHY zinc finger domain-containing protein 1 (Rchy1) (Mus musculus (Mouse)).